A 506-amino-acid chain; its full sequence is Maturase K (506 aa).

Belongs to the intron maturase 2 family. MatK subfamily.

Its subcellular location is the plastid. It localises to the chloroplast. Usually encoded in the trnK tRNA gene intron. Probably assists in splicing its own and other chloroplast group II introns. In Artanema fimbriatum, this protein is Maturase K.